Consider the following 271-residue polypeptide: Formamidopyrimidine-DNA glycosylase (271 aa).

Residue Pro-2 is the Schiff-base intermediate with DNA of the active site. The active-site Proton donor is Glu-3. Lys-57 (proton donor; for beta-elimination activity) is an active-site residue. His-90, Arg-109, and Lys-151 together coordinate DNA. The FPG-type zinc-finger motif lies at 236–270; that stretch reads HVYGRGGETCTQCGNLLSEIRLGQRTTVFCGICQT. The active-site Proton donor; for delta-elimination activity is Arg-260.

The protein belongs to the FPG family. Monomer. Zn(2+) is required as a cofactor.

The catalysed reaction is Hydrolysis of DNA containing ring-opened 7-methylguanine residues, releasing 2,6-diamino-4-hydroxy-5-(N-methyl)formamidopyrimidine.. The enzyme catalyses 2'-deoxyribonucleotide-(2'-deoxyribose 5'-phosphate)-2'-deoxyribonucleotide-DNA = a 3'-end 2'-deoxyribonucleotide-(2,3-dehydro-2,3-deoxyribose 5'-phosphate)-DNA + a 5'-end 5'-phospho-2'-deoxyribonucleoside-DNA + H(+). Involved in base excision repair of DNA damaged by oxidation or by mutagenic agents. Acts as a DNA glycosylase that recognizes and removes damaged bases. Has a preference for oxidized purines, such as 7,8-dihydro-8-oxoguanine (8-oxoG). Has AP (apurinic/apyrimidinic) lyase activity and introduces nicks in the DNA strand. Cleaves the DNA backbone by beta-delta elimination to generate a single-strand break at the site of the removed base with both 3'- and 5'-phosphates. In Shewanella sp. (strain MR-4), this protein is Formamidopyrimidine-DNA glycosylase.